A 202-amino-acid polypeptide reads, in one-letter code: ATP-dependent Clp protease proteolytic subunit (202 aa).

Residue serine 106 is the Nucleophile of the active site. Residue histidine 131 is part of the active site.

This sequence belongs to the peptidase S14 family. In terms of assembly, fourteen ClpP subunits assemble into 2 heptameric rings which stack back to back to give a disk-like structure with a central cavity, resembling the structure of eukaryotic proteasomes.

Its subcellular location is the cytoplasm. The enzyme catalyses Hydrolysis of proteins to small peptides in the presence of ATP and magnesium. alpha-casein is the usual test substrate. In the absence of ATP, only oligopeptides shorter than five residues are hydrolyzed (such as succinyl-Leu-Tyr-|-NHMec, and Leu-Tyr-Leu-|-Tyr-Trp, in which cleavage of the -Tyr-|-Leu- and -Tyr-|-Trp bonds also occurs).. In terms of biological role, cleaves peptides in various proteins in a process that requires ATP hydrolysis. Has a chymotrypsin-like activity. Plays a major role in the degradation of misfolded proteins. This Shewanella sp. (strain MR-7) protein is ATP-dependent Clp protease proteolytic subunit.